A 456-amino-acid polypeptide reads, in one-letter code: Asparagine--tRNA ligase (456 aa).

The protein belongs to the class-II aminoacyl-tRNA synthetase family. As to quaternary structure, homodimer.

The protein localises to the cytoplasm. The enzyme catalyses tRNA(Asn) + L-asparagine + ATP = L-asparaginyl-tRNA(Asn) + AMP + diphosphate + H(+). In Mycoplasma genitalium (strain ATCC 33530 / DSM 19775 / NCTC 10195 / G37) (Mycoplasmoides genitalium), this protein is Asparagine--tRNA ligase.